The chain runs to 373 residues: Chorismate synthase (373 aa).

Position 46 (arginine 46) interacts with NADP(+). FMN-binding positions include 123–125 (RSS), 251–252 (NA), glycine 295, 310–314 (KPTPS), and arginine 337.

Belongs to the chorismate synthase family. FMNH2 serves as cofactor.

It carries out the reaction 5-O-(1-carboxyvinyl)-3-phosphoshikimate = chorismate + phosphate. The protein operates within metabolic intermediate biosynthesis; chorismate biosynthesis; chorismate from D-erythrose 4-phosphate and phosphoenolpyruvate: step 7/7. In terms of biological role, catalyzes the anti-1,4-elimination of the C-3 phosphate and the C-6 proR hydrogen from 5-enolpyruvylshikimate-3-phosphate (EPSP) to yield chorismate, which is the branch point compound that serves as the starting substrate for the three terminal pathways of aromatic amino acid biosynthesis. This reaction introduces a second double bond into the aromatic ring system. This chain is Chorismate synthase, found in Methanococcus maripaludis (strain DSM 14266 / JCM 13030 / NBRC 101832 / S2 / LL).